The chain runs to 232 residues: Biosynthetic peptidoglycan transglycosylase (232 aa).

The chain crosses the membrane as a helical span at residues 12-31 (YLLWFMAASVVLVAVLRWVP).

It belongs to the glycosyltransferase 51 family.

The protein localises to the cell inner membrane. It catalyses the reaction [GlcNAc-(1-&gt;4)-Mur2Ac(oyl-L-Ala-gamma-D-Glu-L-Lys-D-Ala-D-Ala)](n)-di-trans,octa-cis-undecaprenyl diphosphate + beta-D-GlcNAc-(1-&gt;4)-Mur2Ac(oyl-L-Ala-gamma-D-Glu-L-Lys-D-Ala-D-Ala)-di-trans,octa-cis-undecaprenyl diphosphate = [GlcNAc-(1-&gt;4)-Mur2Ac(oyl-L-Ala-gamma-D-Glu-L-Lys-D-Ala-D-Ala)](n+1)-di-trans,octa-cis-undecaprenyl diphosphate + di-trans,octa-cis-undecaprenyl diphosphate + H(+). It functions in the pathway cell wall biogenesis; peptidoglycan biosynthesis. In terms of biological role, peptidoglycan polymerase that catalyzes glycan chain elongation from lipid-linked precursors. In Pseudomonas aeruginosa (strain ATCC 15692 / DSM 22644 / CIP 104116 / JCM 14847 / LMG 12228 / 1C / PRS 101 / PAO1), this protein is Biosynthetic peptidoglycan transglycosylase.